A 355-amino-acid polypeptide reads, in one-letter code: Probable nitronate monooxygenase (355 aa).

FMN contacts are provided by residues Asn71, Gln175, Gly180, Gly218, and 237-240 (QMGT).

It belongs to the nitronate monooxygenase family. NMO class I subfamily. FMN is required as a cofactor.

It catalyses the reaction 3 propionate 3-nitronate + 3 O2 + H2O = 3 3-oxopropanoate + 2 nitrate + nitrite + H2O2 + 3 H(+). Its function is as follows. Nitronate monooxygenase that uses molecular oxygen to catalyze the oxidative denitrification of alkyl nitronates. Acts on propionate 3-nitronate (P3N), the presumed physiological substrate. Probably functions in the detoxification of P3N, a metabolic poison produced by plants and fungi as a defense mechanism. The polypeptide is Probable nitronate monooxygenase (Staphylococcus aureus (strain JH1)).